A 376-amino-acid chain; its full sequence is Glucose-1-phosphate adenylyltransferase (376 aa).

Alpha-D-glucose 1-phosphate contacts are provided by residues Tyr101, Gly166, 181–182, and Ser192; that span reads EK.

Belongs to the bacterial/plant glucose-1-phosphate adenylyltransferase family. Homotetramer.

The enzyme catalyses alpha-D-glucose 1-phosphate + ATP + H(+) = ADP-alpha-D-glucose + diphosphate. Its pathway is glycan biosynthesis; glycogen biosynthesis. In terms of biological role, involved in the biosynthesis of ADP-glucose, a building block required for the elongation reactions to produce glycogen. Catalyzes the reaction between ATP and alpha-D-glucose 1-phosphate (G1P) to produce pyrophosphate and ADP-Glc. The chain is Glucose-1-phosphate adenylyltransferase from Bacillus cereus (strain Q1).